A 357-amino-acid chain; its full sequence is UDP-N-acetylglucosamine--N-acetylmuramyl-(pentapeptide) pyrophosphoryl-undecaprenol N-acetylglucosamine transferase (357 aa).

Residues 13-15 (TGG), Asn-125, Arg-161, Ser-189, Ile-243, and Gln-288 each bind UDP-N-acetyl-alpha-D-glucosamine.

It belongs to the glycosyltransferase 28 family. MurG subfamily.

Its subcellular location is the cell inner membrane. It carries out the reaction di-trans,octa-cis-undecaprenyl diphospho-N-acetyl-alpha-D-muramoyl-L-alanyl-D-glutamyl-meso-2,6-diaminopimeloyl-D-alanyl-D-alanine + UDP-N-acetyl-alpha-D-glucosamine = di-trans,octa-cis-undecaprenyl diphospho-[N-acetyl-alpha-D-glucosaminyl-(1-&gt;4)]-N-acetyl-alpha-D-muramoyl-L-alanyl-D-glutamyl-meso-2,6-diaminopimeloyl-D-alanyl-D-alanine + UDP + H(+). It participates in cell wall biogenesis; peptidoglycan biosynthesis. Cell wall formation. Catalyzes the transfer of a GlcNAc subunit on undecaprenyl-pyrophosphoryl-MurNAc-pentapeptide (lipid intermediate I) to form undecaprenyl-pyrophosphoryl-MurNAc-(pentapeptide)GlcNAc (lipid intermediate II). This chain is UDP-N-acetylglucosamine--N-acetylmuramyl-(pentapeptide) pyrophosphoryl-undecaprenol N-acetylglucosamine transferase, found in Bordetella parapertussis (strain 12822 / ATCC BAA-587 / NCTC 13253).